We begin with the raw amino-acid sequence, 117 residues long: DNA-directed RNA polymerase subunit omega (117 aa).

Belongs to the RNA polymerase subunit omega family. As to quaternary structure, the RNAP catalytic core consists of 2 alpha, 1 beta, 1 beta' and 1 omega subunit. When a sigma factor is associated with the core the holoenzyme is formed, which can initiate transcription.

The enzyme catalyses RNA(n) + a ribonucleoside 5'-triphosphate = RNA(n+1) + diphosphate. Its function is as follows. Promotes RNA polymerase assembly. Latches the N- and C-terminal regions of the beta' subunit thereby facilitating its interaction with the beta and alpha subunits. The sequence is that of DNA-directed RNA polymerase subunit omega from Cereibacter sphaeroides (strain ATCC 17025 / ATH 2.4.3) (Rhodobacter sphaeroides).